A 367-amino-acid polypeptide reads, in one-letter code: Probable L-aspartate decarboxylase (367 aa).

Lys216 is subject to N6-(pyridoxal phosphate)lysine.

The protein belongs to the group II decarboxylase family. MfnA subfamily. The cofactor is pyridoxal 5'-phosphate.

It catalyses the reaction L-aspartate + H(+) = beta-alanine + CO2. Its pathway is cofactor biosynthesis; coenzyme A biosynthesis. Functionally, catalyzes the decarboxylation of L-aspartate to produce beta-alanine. The sequence is that of Probable L-aspartate decarboxylase from Archaeoglobus fulgidus (strain ATCC 49558 / DSM 4304 / JCM 9628 / NBRC 100126 / VC-16).